A 104-amino-acid chain; its full sequence is Cuticle protein 67, isoform B (104 aa).

Repeat copies occupy residues 7 to 10 (AAPA), 14 to 17 (AAPA), 21 to 24 (AAPA), 28 to 31 (AAPA), 85 to 88 (AAPA), 92 to 95 (AAPA), and 98 to 101 (AAPA).

In terms of biological role, component of the cuticle of migratory locust which contains more than 100 different structural proteins. In Locusta migratoria (Migratory locust), this protein is Cuticle protein 67, isoform B.